The chain runs to 260 residues: Cytochrome c oxidase subunit 2 (260 aa).

Residues 1 to 43 (MILRLLECRFFTIALCDAAEPWQLGFQDAATPMMQGIIDLHHD) are Mitochondrial intermembrane-facing. The chain crosses the membrane as a helical span at residues 44–64 (IFFFLILILVFVLWMLVRALW). The Mitochondrial matrix portion of the chain corresponds to 65-84 (HFNEQTNPIPQRIVHGTTIE). Residues 85 to 105 (IIWTIFPSVILLFIAIPSFAL) traverse the membrane as a helical segment. Residues 106 to 260 (LYSMDGVLVD…VSNQLILQTN (155 aa)) lie on the Mitochondrial intermembrane side of the membrane. Cu cation contacts are provided by H189, C224, E226, C228, H232, and M235. E226 is a binding site for Mg(2+).

Belongs to the cytochrome c oxidase subunit 2 family. In terms of assembly, component of the cytochrome c oxidase (complex IV, CIV), a multisubunit enzyme composed of a catalytic core of 3 subunits and several supernumerary subunits. The complex exists as a monomer or a dimer and forms supercomplexes (SCs) in the inner mitochondrial membrane with ubiquinol-cytochrome c oxidoreductase (cytochrome b-c1 complex, complex III, CIII). It depends on Cu cation as a cofactor.

The protein resides in the mitochondrion inner membrane. It carries out the reaction 4 Fe(II)-[cytochrome c] + O2 + 8 H(+)(in) = 4 Fe(III)-[cytochrome c] + 2 H2O + 4 H(+)(out). In terms of biological role, component of the cytochrome c oxidase, the last enzyme in the mitochondrial electron transport chain which drives oxidative phosphorylation. The respiratory chain contains 3 multisubunit complexes succinate dehydrogenase (complex II, CII), ubiquinol-cytochrome c oxidoreductase (cytochrome b-c1 complex, complex III, CIII) and cytochrome c oxidase (complex IV, CIV), that cooperate to transfer electrons derived from NADH and succinate to molecular oxygen, creating an electrochemical gradient over the inner membrane that drives transmembrane transport and the ATP synthase. Cytochrome c oxidase is the component of the respiratory chain that catalyzes the reduction of oxygen to water. Electrons originating from reduced cytochrome c in the intermembrane space (IMS) are transferred via the dinuclear copper A center (CU(A)) of subunit 2 and heme A of subunit 1 to the active site in subunit 1, a binuclear center (BNC) formed by heme A3 and copper B (CU(B)). The BNC reduces molecular oxygen to 2 water molecules using 4 electrons from cytochrome c in the IMS and 4 protons from the mitochondrial matrix. The sequence is that of Cytochrome c oxidase subunit 2 (COX2) from Zea mays (Maize).